The sequence spans 391 residues: 1-deoxy-D-xylulose 5-phosphate reductoisomerase (391 aa).

T17, G18, S19, I20, N47, and N130 together coordinate NADPH. K131 is a binding site for 1-deoxy-D-xylulose 5-phosphate. E132 is an NADPH binding site. Position 156 (D156) interacts with Mn(2+). 1-deoxy-D-xylulose 5-phosphate-binding residues include S157, E158, S182, and H205. Position 158 (E158) interacts with Mn(2+). An NADPH-binding site is contributed by G211. 4 residues coordinate 1-deoxy-D-xylulose 5-phosphate: S218, N223, K224, and E227. E227 contributes to the Mn(2+) binding site.

The protein belongs to the DXR family. Mg(2+) is required as a cofactor. Mn(2+) serves as cofactor.

It catalyses the reaction 2-C-methyl-D-erythritol 4-phosphate + NADP(+) = 1-deoxy-D-xylulose 5-phosphate + NADPH + H(+). It functions in the pathway isoprenoid biosynthesis; isopentenyl diphosphate biosynthesis via DXP pathway; isopentenyl diphosphate from 1-deoxy-D-xylulose 5-phosphate: step 1/6. Catalyzes the NADPH-dependent rearrangement and reduction of 1-deoxy-D-xylulose-5-phosphate (DXP) to 2-C-methyl-D-erythritol 4-phosphate (MEP). This is 1-deoxy-D-xylulose 5-phosphate reductoisomerase from Sinorhizobium fredii (strain NBRC 101917 / NGR234).